The following is a 178-amino-acid chain: Methyltransferase flvH (178 aa).

The 17-residue stretch at 120 to 136 folds into the Post-SET domain; the sequence is QPFNCFCGSQNCLGLIA. Zn(2+) is bound by residues Cys124, Cys126, and Cys131.

This sequence belongs to the class V-like SAM-binding methyltransferase superfamily.

It catalyses the reaction L-lysine + 2 S-adenosyl-L-methionine = N(6),N(6)-dimethyl-L-lysine + 2 S-adenosyl-L-homocysteine + 2 H(+). It participates in secondary metabolite biosynthesis; terpenoid biosynthesis. In terms of biological role, methyltransferase; part of the gene cluster that mediates the biosynthesis of flavunoidine, an alkaloidal terpenoid with a tetracyclic cage-like core connected to dimethylcadaverine via a C-N bond and acylated with 5,5-dimethyl-L-pipecolate. The tetracyclic core is synthesized by the terpene cyclase flvE and the cytochrome P450 monooxygenase flvD. The terpene cyclase flvE catalyzes the cyclization of farnesyl pyrophosphate (FPP) to form (1R,4R,5S)-(+)-acoradiene and the cytochrome P450 monooxygenase flvD is then responsible for oxidative conversion of (1R,4R,5S)-(+)-acoradiene into the tetracyclic cage present in the final product flavunoidine. In parallel, the N-methyltransferase flvH dimethylates L-lysine to give N,N-dimethyl-L-Lysin which is decarboxylated by flvG to afford dimethylcadaverine. The terpene cyclase-like protein flvF is the enzyme that attaches the dimethylcadaverine precusor at the C-7 of the tetracyclic cage to yield pre-flavunoidine. The cytochrome monooxygenase flvC hydroxylates the C-10 position of pre-flavunoidine whereas the NRPS flvI acylates the terpenoid core at the hydroxylated C-10 with dimethylpipecolate to yield final flavunoidine. The bifunctional enzyme flvA and the dehydrogenase flvB are responsible for the synthesis of the dimethylpipecolate precursor. The PLP-dependent lyase domain of flvA might use L-O-acetyl-homoserine and alpha-keto-isovalerate to form an intermediary ketone that can cyclize intramolecularly to yield an imine. The imine can be reduced by flvB to yield the 6-carboxylated pipecolate. The C-terminal alpha-KG-dependent oxygenase domain of flvA is then proposed to catalyze the decarboxylation to yield dimethylpipecolate. This is Methyltransferase flvH from Aspergillus flavus (strain ATCC 200026 / FGSC A1120 / IAM 13836 / NRRL 3357 / JCM 12722 / SRRC 167).